A 1577-amino-acid chain; its full sequence is Dynamin-binding protein (1577 aa).

N-acetylmethionine is present on methionine 1. SH3 domains are found at residues 2–61 (EPGS…IVTI), 66–126 (EGER…ELCL), and 145–204 (YSMG…LLGP). The disordered stretch occupies residues 209–242 (DESVNAGSGDDSTLNDEVDVSPEEVESEGDEDDQ). A compositionally biased stretch (acidic residues) spans 221-242 (TLNDEVDVSPEEVESEGDEDDQ). An SH3 4 domain is found at 243-302 (QAGTYGIALYRFQALESNELDFEVGDKIRILGTLEDGWLEGRLKGKTGIFPHRFVKLCPS). 2 disordered regions span residues 307 to 361 (ETMA…EEPL) and 375 to 437 (GQDE…SRQC). A compositionally biased stretch (polar residues) spans 400 to 410 (PDLSQEVNGIS). Serine 494 is subject to Phosphoserine. 2 disordered regions span residues 519-547 (PERPKRRPGLPDKEPATEITPASQGDNLD) and 590-681 (RGSS…SEYT). The span at 617–626 (TPTSTSPHLL) shows a compositional bias: low complexity. Over residues 632 to 651 (KPGPPLVVRPSRPAPLPPPT) the composition is skewed to pro residues. The span at 652–662 (QQRLNTASPKP) shows a compositional bias: polar residues. Residues 672 to 681 (APEKEGSEYT) show a composition bias toward basic and acidic residues. Serine 684 carries the phosphoserine modification. Residues 705-755 (LDMHTRAQEELNLLLEEKQDESLRAETLETLKSYESTIQSLNLELQQLREM) are a coiled coil. Residues 784–967 (KRAKVVAELL…KEINANINEY (184 aa)) enclose the DH domain. Positions 1008–1217 (LKHLTGFAPQ…LKASDREGNL (210 aa)) constitute a BAR domain. Residues 1285–1348 (PPEKLFHVQR…YSSFLKPYNP (64 aa)) form the SH3 5 domain. Over residues 1353–1375 (SDSSVVSHSSTESEHSGSSPSFH) the composition is skewed to low complexity. Disordered stretches follow at residues 1353-1381 (SDSSVVSHSSTESEHSGSSPSFHRQNSSS) and 1415-1510 (ETLG…LGSS). Composition is skewed to polar residues over residues 1418-1428 (GVSSNTGNPET) and 1484-1497 (DQGSDSIKGTSRAC). One can recognise an SH3 6 domain in the interval 1513 to 1576 (EGNQVYFAIY…PSNYIRKTEY (64 aa)).

Binds DNM1 via its N-terminal SH3 domains. The C-terminal SH3 domain binds a complex containing actin, tubulin, Hsp70 and actin-regulatory proteins, such as ENAH, EVL, WIRE, CR16, WAVE1 and NAP1L1. Interacts with FASLG. Interacts (via SH3 domain 6) with WASL. Interacts (via SH3 domain 6) interacts with ENAH. Interacts (via C-terminal domain) with TJP1; required for the apical cell-cell junction localization of DNMBP. In terms of tissue distribution, widely expressed.

The protein resides in the cytoplasm. The protein localises to the golgi apparatus. It is found in the golgi stack. Its subcellular location is the cytoskeleton. It localises to the synapse. The protein resides in the cell junction. In terms of biological role, plays a critical role as a guanine nucleotide exchange factor (GEF) for CDC42 in several intracellular processes associated with the actin and microtubule cytoskeleton. Regulates the structure of apical junctions in epithelial cells. Participates in the normal lumenogenesis of epithelial cell cysts by regulating spindle orientation. Plays a role in ciliogenesis. May play a role in membrane trafficking between the cell surface and the Golgi. This is Dynamin-binding protein from Rattus norvegicus (Rat).